The primary structure comprises 274 residues: DNA repair protein Rad1 (274 aa).

It belongs to the rad1 family. In terms of assembly, component of the 9-1-1 checkpoint clamp complex consisting of Rad9 isoform A, Rad1 and Hus1-like; the interaction with Hus1-like is direct. Does not interact directly with Rad9; this interaction is probably mediated by Hus1-like. This complex probably also forms with Rad9 isoform B, however 9-1-1 complex containing Rad9 isoform A localizes to the nuclear periphery. As to expression, expressed in ovary.

Its subcellular location is the cytoplasm. It is found in the nucleus. It localises to the nucleus envelope. The polypeptide is DNA repair protein Rad1 (Drosophila melanogaster (Fruit fly)).